Reading from the N-terminus, the 291-residue chain is B3 domain-containing protein At2g16210 (291 aa).

The segment at residues phenylalanine 19–aspartate 114 is a DNA-binding region (TF-B3 1). A compositionally biased stretch (polar residues) spans valine 149–alanine 159. Residues valine 149–threonine 182 form a disordered region. The segment covering alanine 172–threonine 182 has biased composition (basic and acidic residues). The TF-B3 2 DNA-binding region spans alanine 200–proline 291.

It is found in the nucleus. This is B3 domain-containing protein At2g16210 from Arabidopsis thaliana (Mouse-ear cress).